Reading from the N-terminus, the 430-residue chain is Histidine--tRNA ligase (430 aa).

It belongs to the class-II aminoacyl-tRNA synthetase family. In terms of assembly, homodimer.

Its subcellular location is the cytoplasm. The catalysed reaction is tRNA(His) + L-histidine + ATP = L-histidyl-tRNA(His) + AMP + diphosphate + H(+). In Acinetobacter baumannii (strain ACICU), this protein is Histidine--tRNA ligase.